The following is a 165-amino-acid chain: Thiol peroxidase (165 aa).

A Thioredoxin domain is found at 17 to 165 (PQVGEIVENF…NYEAALAVLA (149 aa)). The active-site Cysteine sulfenic acid (-SOH) intermediate is the Cys-59. Residues Cys-59 and Cys-93 are joined by a disulfide bond.

Belongs to the peroxiredoxin family. Tpx subfamily. In terms of assembly, homodimer.

It catalyses the reaction a hydroperoxide + [thioredoxin]-dithiol = an alcohol + [thioredoxin]-disulfide + H2O. Functionally, thiol-specific peroxidase that catalyzes the reduction of hydrogen peroxide and organic hydroperoxides to water and alcohols, respectively. Plays a role in cell protection against oxidative stress by detoxifying peroxides. This chain is Thiol peroxidase, found in Haemophilus influenzae (strain ATCC 51907 / DSM 11121 / KW20 / Rd).